The chain runs to 2329 residues: Pre-mRNA-splicing factor 8 homolog (2329 aa).

The disordered stretch occupies residues 1 to 53 (MANYGGHPQTEPHAIPDSILEEKSRKWKQLQGKRYSEKKKFGMSDTQKEEMPP). Residues 34–53 (RYSEKKKFGMSDTQKEEMPP) are compositionally biased toward basic and acidic residues. The reverse transcriptase homology domain stretch occupies residues 804–1295 (TTVHWLESRR…KIQTRIKIGL (492 aa)). The tract at residues 1296 to 1570 (NSKMPSRFPP…TLKISLIQIF (275 aa)) is linker. The tract at residues 1506–1519 (MKFKKLTNAQRSGL) is important for branch point selection. Residues 1574–1745 (LWQKIHESVV…LRERIRKGLQ (172 aa)) are restriction endonuclease homology domain. The segment at 1760 to 2013 (NYGELFSNQI…ILGMEISAPS (254 aa)) is RNase H homology domain. An MPN domain is found at 2096 to 2227 (TYILPKNILK…LTAYKLTPSG (132 aa)).

Part of the U5 snRNP complex and of the U4/U6-U5 tri-snRNP complex.

It is found in the nucleus. In terms of biological role, functions as a scaffold that mediates the ordered assembly of spliceosomal proteins and snRNAs. Required for the assembly of the U4/U6-U5 tri-snRNP complex. Functions as a scaffold that positions spliceosomal U2, U5 and U6 snRNAs at splice sites on pre-mRNA substrates, so that splicing can occur. Interacts with both the 5' and the 3' splice site. The chain is Pre-mRNA-splicing factor 8 homolog (prp-8) from Caenorhabditis elegans.